The sequence spans 662 residues: UvrABC system protein B (662 aa).

Residues 25–412 (EGIEKGLKMQ…SQKIVEQIIR (388 aa)) form the Helicase ATP-binding domain. 38-45 (GVTGSGKT) serves as a coordination point for ATP. The Beta-hairpin signature appears at 91–114 (YYDYYQPEAYLPATDTYIEKDSAI). Residues 429-595 (QVDDLYGEIK…TVQKAVRDVI (167 aa)) form the Helicase C-terminal domain. A UVR domain is found at 622 to 657 (KQYVEKLTREMKEAAKALEFEKAAMLRDLIIELRAQ).

The protein belongs to the UvrB family. As to quaternary structure, forms a heterotetramer with UvrA during the search for lesions. Interacts with UvrC in an incision complex.

The protein resides in the cytoplasm. The UvrABC repair system catalyzes the recognition and processing of DNA lesions. A damage recognition complex composed of 2 UvrA and 2 UvrB subunits scans DNA for abnormalities. Upon binding of the UvrA(2)B(2) complex to a putative damaged site, the DNA wraps around one UvrB monomer. DNA wrap is dependent on ATP binding by UvrB and probably causes local melting of the DNA helix, facilitating insertion of UvrB beta-hairpin between the DNA strands. Then UvrB probes one DNA strand for the presence of a lesion. If a lesion is found the UvrA subunits dissociate and the UvrB-DNA preincision complex is formed. This complex is subsequently bound by UvrC and the second UvrB is released. If no lesion is found, the DNA wraps around the other UvrB subunit that will check the other stand for damage. In Carboxydothermus hydrogenoformans (strain ATCC BAA-161 / DSM 6008 / Z-2901), this protein is UvrABC system protein B.